A 276-amino-acid chain; its full sequence is Urease accessory protein UreD (276 aa).

It belongs to the UreD family. In terms of assembly, ureD, UreF and UreG form a complex that acts as a GTP-hydrolysis-dependent molecular chaperone, activating the urease apoprotein by helping to assemble the nickel containing metallocenter of UreC. The UreE protein probably delivers the nickel.

Its subcellular location is the cytoplasm. Its function is as follows. Required for maturation of urease via the functional incorporation of the urease nickel metallocenter. This chain is Urease accessory protein UreD, found in Bradyrhizobium diazoefficiens (strain JCM 10833 / BCRC 13528 / IAM 13628 / NBRC 14792 / USDA 110).